A 317-amino-acid chain; its full sequence is Acetyl-coenzyme A carboxylase carboxyl transferase subunit beta (317 aa).

A disordered region spans residues 1–28; that stretch reads MANNMTDTMTKPDINNDSTSLQQNGNKA. The CoA carboxyltransferase N-terminal domain maps to 55–317; it reads PSTKCSSCHS…LCSVPNVDVQ (263 aa). Residues cysteine 59, cysteine 62, cysteine 78, and cysteine 81 each coordinate Zn(2+). A C4-type zinc finger spans residues 59–81; sequence CSSCHSIITNTALIFNCYVCPHC.

The protein belongs to the AccD/PCCB family. As to quaternary structure, acetyl-CoA carboxylase is a heterohexamer composed of biotin carboxyl carrier protein (AccB), biotin carboxylase (AccC) and two subunits each of ACCase subunit alpha (AccA) and ACCase subunit beta (AccD). Zn(2+) serves as cofactor.

The protein resides in the cytoplasm. It catalyses the reaction N(6)-carboxybiotinyl-L-lysyl-[protein] + acetyl-CoA = N(6)-biotinyl-L-lysyl-[protein] + malonyl-CoA. It functions in the pathway lipid metabolism; malonyl-CoA biosynthesis; malonyl-CoA from acetyl-CoA: step 1/1. Component of the acetyl coenzyme A carboxylase (ACC) complex. Biotin carboxylase (BC) catalyzes the carboxylation of biotin on its carrier protein (BCCP) and then the CO(2) group is transferred by the transcarboxylase to acetyl-CoA to form malonyl-CoA. This is Acetyl-coenzyme A carboxylase carboxyl transferase subunit beta from Psychrobacter cryohalolentis (strain ATCC BAA-1226 / DSM 17306 / VKM B-2378 / K5).